We begin with the raw amino-acid sequence, 318 residues long: Elongation factor Ts, mitochondrial (318 aa).

The transit peptide at 1–18 (MLLQRFFTRALHSTRQLY) directs the protein to the mitochondrion.

It belongs to the EF-Ts family.

The protein resides in the mitochondrion. In terms of biological role, associates with the EF-Tu.GDP complex and induces the exchange of GDP to GTP. It remains bound to the aminoacyl-tRNA.EF-Tu.GTP complex up to the GTP hydrolysis stage on the ribosome. The sequence is that of Elongation factor Ts, mitochondrial from Drosophila melanogaster (Fruit fly).